A 413-amino-acid chain; its full sequence is 1-deoxy-D-xylulose 5-phosphate reductoisomerase (413 aa).

7 residues coordinate NADPH: Thr13, Gly14, Ser15, Ile16, Arg40, Asn41, and Asn127. Lys128 contacts 1-deoxy-D-xylulose 5-phosphate. Glu129 is a binding site for NADPH. Asp153 lines the Mn(2+) pocket. 1-deoxy-D-xylulose 5-phosphate contacts are provided by Ser154, Glu155, Ser184, and His207. A Mn(2+)-binding site is contributed by Glu155. NADPH is bound at residue Gly213. Residues Ser220, Asn225, Lys226, and Glu229 each coordinate 1-deoxy-D-xylulose 5-phosphate. Glu229 contributes to the Mn(2+) binding site.

This sequence belongs to the DXR family. Mg(2+) is required as a cofactor. Mn(2+) serves as cofactor.

The catalysed reaction is 2-C-methyl-D-erythritol 4-phosphate + NADP(+) = 1-deoxy-D-xylulose 5-phosphate + NADPH + H(+). Its pathway is isoprenoid biosynthesis; isopentenyl diphosphate biosynthesis via DXP pathway; isopentenyl diphosphate from 1-deoxy-D-xylulose 5-phosphate: step 1/6. Catalyzes the NADPH-dependent rearrangement and reduction of 1-deoxy-D-xylulose-5-phosphate (DXP) to 2-C-methyl-D-erythritol 4-phosphate (MEP). In Nitrosomonas europaea (strain ATCC 19718 / CIP 103999 / KCTC 2705 / NBRC 14298), this protein is 1-deoxy-D-xylulose 5-phosphate reductoisomerase.